Here is a 510-residue protein sequence, read N- to C-terminus: Gallate 1-beta-glucosyltransferase (510 aa).

H19 functions as the Proton acceptor in the catalytic mechanism. Residue H19 participates in an anthocyanidin binding. The UDP-alpha-D-glucose site is built by Q343, H358, W361, N362, S363, and E366. An an anthocyanidin-binding site is contributed by G381. The UDP-alpha-D-glucose site is built by D382 and Q383.

The protein belongs to the UDP-glycosyltransferase family. In terms of tissue distribution, expressed in swelling buds and young leaves.

The catalysed reaction is 3,4,5-trihydroxybenzoate + UDP-alpha-D-glucose = 1-O-galloyl-beta-D-glucose + UDP. The enzyme catalyses vanillate + UDP-alpha-D-glucose = 1-O-(4-hydroxy-3-methoxybenzoyl)-beta-D-glucose + UDP. It carries out the reaction 3,4-dihydroxybenzoate + UDP-alpha-D-glucose = 1-O-(3,4-dihydroxy-benzoyl)-beta-D-glucose + UDP. Functionally, glucosyltransferase that catalyzes the formation of 1-O-beta-D-glucose esters with hydroxybenzoic acids as preferred glucosyl acceptors. Has the highest activity with 3,4-dihydroxybenzoate, vanillate and gallate in vitro. Gallate is the predicted native substrate of the enzyme, which thus catalyzes the formation of 1-O-galloyl-beta-D-glucose, the first committed step of gallotannin biosynthesis. This is Gallate 1-beta-glucosyltransferase from Quercus robur (English oak).